The chain runs to 302 residues: Mitochondrial adapter protein MCP1 (302 aa).

Residues 1 to 35 (MIKLHEVPPEPVDPASLPHDVNAHSPEGDGNPDKR) form a disordered region. The Cytoplasmic portion of the chain corresponds to 1 to 61 (MIKLHEVPPE…RFLWNCQKIS (61 aa)). Positions 4–12 (LHEVPPEPV) match the PxP motif. A helical transmembrane segment spans residues 62–82 (VLPMALYFPLHAANTLITPAV). Residues 83-100 (SPDSAPDDVLMMVREILP) lie on the Mitochondrial intermembrane side of the membrane. A helical membrane pass occupies residues 101–121 (SITTKLLVAGITLHVSAGVLL). The Cytoplasmic segment spans residues 122-173 (RIVNNWNKPRRNRHRHLKISAEQDLSQDSIGLTGGISGYLFGLYKTFRIPPQ). A helical membrane pass occupies residues 174–194 (VISGYILVPVLIYHLLIMKWV). At 195 to 219 (PNSISTEVDFASIKQLLSSKNRWWK) the chain is on the mitochondrial intermembrane side. The helical transmembrane segment at 220–240 (WLGGLVPLAILLESGVYHIGS) threads the bilayer. Over 241–258 (GLCRYFGVRKMTSRKKWS) the chain is Cytoplasmic. The chain crosses the membrane as a helical span at residues 259 to 276 (TAINLLTLVGFVSLIRLM). At 277–302 (KEDSTKLGPNQFESIFKKIRLLLHVN) the chain is on the mitochondrial intermembrane side.

As to quaternary structure, interacts (via PxP motif) with VPS13 (via SHR-BD domain).

It is found in the mitochondrion outer membrane. Functionally, recruits the lipid transfer protein Vps13 to mitochondria thereby promoting vacuole-mitochondria contacts. Involved in mitochondrial lipid homeostasis. This is Mitochondrial adapter protein MCP1 from Saccharomyces cerevisiae (strain ATCC 204508 / S288c) (Baker's yeast).